Reading from the N-terminus, the 225-residue chain is Class E basic helix-loop-helix protein 23 (225 aa).

Residues 35–104 are disordered; it reads EAARGYGTPG…PREQRSLRLS (70 aa). In terms of domain architecture, bHLH spans 100 to 154; the sequence is SLRLSINARERRRMHDLNDALDGLRAVIPYAHSPSVRKLSKIATLLLAKNYILMQ.

The protein localises to the nucleus. Its function is as follows. May function as transcriptional repressor. May modulate the expression of genes required for the differentiation and/or maintenance of pancreatic and neuronal cell types. May be important for rod bipolar cell maturation. The sequence is that of Class E basic helix-loop-helix protein 23 (BHLHE23) from Homo sapiens (Human).